Here is a 953-residue protein sequence, read N- to C-terminus: Nucleotide-binding oligomerization domain-containing protein 1 (953 aa).

A CARD domain is found at 15 to 107 (GCHSHIKLLK…VDLRLWLSEI (93 aa)). The 336-residue stretch at 196-531 (ETVFVFGDAG…AFFTAFFLVA (336 aa)) folds into the NACHT domain. Residue 202–209 (GDAGVGKS) participates in ATP binding. Residues cysteine 558 and cysteine 567 are each lipidated (S-palmitoyl cysteine). LRR repeat units follow at residues 702-725 (FHRQ…ELQP), 727-750 (FSRL…VLCE), 755-778 (YKIV…YVAQ), 783-806 (CRGL…CVAL), 839-862 (HPSL…SLAQ), 867-890 (NTTL…CFAE), 895-918 (NQTL…QLAR), and 923-946 (NTAI…VFEN). The S-palmitoyl cysteine moiety is linked to residue cysteine 952.

Belongs to the NOD1-NOD2 family. As to quaternary structure, homooligomer: homooligomerizes following ligand-binding, promoting RIPK2 recruitment. Interacts (via CARD domain) with RIPK2 (via CARD domain). Following RIPK2 recruitment, RIPK2 homooligomerizes via its CARD domain and forms long filaments named RIPosomes. Interacts (via CARD domain) with ubiquitin; inhibiting interaction with RIPK2. Interacts with ARHGEF2. Interacts with NLRP10 and recruits it to the cell membrane following invasive bacterial infection. Interacts with IFIH1; this interaction promotes transcription of antiviral genes and inhibition of viral replication. Interacts with Irgm1; promoting NOD1 degradation. Interacts with ATG16L1. Post-translationally, ubiquitinated. 'Lys-48'-linked polyubiquitination by RNF34 promotes proteasomal degradation and thereby negatively regulates NOD1 for instance in NF-kappa-B activation. In terms of processing, palmitoylated. Palmitoylation is required for proper recruitment to the bacterial entry site and hence for proper signaling upon cognate peptidoglycan detection. Degraded via selective autophagy following interaction with Irgm1. Irgm1 promotes NOD1-RIPK2 RIPosome recruitment to autophagosome membranes, promoting their SQSTM1/p62-dependent autophagic degradation. In terms of tissue distribution, although ubiquitously expressed, NOD1 levels are more abundant in immune cells, the gastrointestinal tract, and adipose tissue.

The protein localises to the cell membrane. The protein resides in the apical cell membrane. Its subcellular location is the basolateral cell membrane. It localises to the cytoplasm. Functionally, pattern recognition receptor (PRR) that detects bacterial peptidoglycan fragments and other danger signals and thus participates in both innate and adaptive immune responses. Specifically recognizes and binds gamma-D-glutamyl-meso-diaminopimelic acid (iE-DAP), a dipeptide present in peptidoglycan of Gram-negative bacteria. Preferentially binds iE-DAP in tetrapeptide-containing muropeptides (MurNAc-TetraDAP or TetraDAP). Ligand binding triggers oligomerization that facilitates the binding and subsequent activation of the proximal adapter receptor-interacting RIPK2. Following recruitment, RIPK2 undergoes 'Met-1'- (linear) and 'Lys-63'-linked polyubiquitination by E3 ubiquitin-protein ligases XIAP, BIRC2, BIRC3 and the LUBAC complex, becoming a scaffolding protein for downstream effectors, triggering activation of the NF-kappa-B and MAP kinases signaling. This in turn leads to the transcriptional activation of hundreds of genes involved in immune response. Also acts as a regulator of antiviral response elicited by dsRNA and the expression of RLR pathway members by targeting IFIH1 and TRAF3 to modulate the formation of IFIH1-MAVS and TRAF3-MAVS complexes leading to increased transcription of type I IFNs. Also acts as a regulator of autophagy via its interaction with ATG16L1, possibly by recruiting ATG16L1 at the site of bacterial entry. Besides recognizing pathogens, also involved in the endoplasmic reticulum stress response: acts by sensing and binding to the cytosolic metabolite sphingosine-1-phosphate generated in response to endoplasmic reticulum stress, initiating an inflammation process that leads to activation of the NF-kappa-B and MAP kinases signaling. In addition, plays a role in insulin trafficking in beta cells in a cell-autonomous manner. Mechanistically, upon recognizing cognate ligands, NOD1 and RIPK2 localize to insulin vesicles where they recruit RAB1A to direct insulin trafficking through the cytoplasm. In Mus musculus (Mouse), this protein is Nucleotide-binding oligomerization domain-containing protein 1.